The sequence spans 149 residues: Deoxyuridine 5'-triphosphate nucleotidohydrolase (149 aa).

Substrate is bound by residues 68–70 (RSG), Asn-81, 85–87 (TID), and Lys-95.

Belongs to the dUTPase family. Requires Mg(2+) as cofactor.

The enzyme catalyses dUTP + H2O = dUMP + diphosphate + H(+). The protein operates within pyrimidine metabolism; dUMP biosynthesis; dUMP from dCTP (dUTP route): step 2/2. Functionally, this enzyme is involved in nucleotide metabolism: it produces dUMP, the immediate precursor of thymidine nucleotides and it decreases the intracellular concentration of dUTP so that uracil cannot be incorporated into DNA. This is Deoxyuridine 5'-triphosphate nucleotidohydrolase from Bdellovibrio bacteriovorus (strain ATCC 15356 / DSM 50701 / NCIMB 9529 / HD100).